Here is a 338-residue protein sequence, read N- to C-terminus: Phenylalanine--tRNA ligase alpha subunit (338 aa).

Glu-252 is a Mg(2+) binding site.

This sequence belongs to the class-II aminoacyl-tRNA synthetase family. Phe-tRNA synthetase alpha subunit type 1 subfamily. Tetramer of two alpha and two beta subunits. It depends on Mg(2+) as a cofactor.

It is found in the cytoplasm. It carries out the reaction tRNA(Phe) + L-phenylalanine + ATP = L-phenylalanyl-tRNA(Phe) + AMP + diphosphate + H(+). The protein is Phenylalanine--tRNA ligase alpha subunit of Pseudomonas aeruginosa (strain UCBPP-PA14).